The following is a 368-amino-acid chain: Protein mab-21-like (368 aa).

Belongs to the mab-21 family.

The polypeptide is Protein mab-21-like (Drosophila melanogaster (Fruit fly)).